Consider the following 213-residue polypeptide: Golgi to ER traffic protein 1 (213 aa).

Over 1–4 (MESW) the chain is Lumenal. Residues 5-25 (LLVILAFLVLERLWPLIDSLI) traverse the membrane as a helical segment. Over 26-98 (QRFAQANSTK…RTKASLKKVK (73 aa)) the chain is Cytoplasmic. Positions 55–99 (AQDQYVKWTKNNRTLEKINKQIEEEKKQLLSQVDRTKASLKKVKL) form a coiled coil. A helical membrane pass occupies residues 99–119 (LVLITVPFTILKFYKGKMPIY). At 120–158 (DLPKGLFPNYLQGLFQHGWVYLALGPLNIKKVGDGTHVT) the chain is on the lumenal side. The helical transmembrane segment at 159–175 (VSLAIWLFALLKVVSTL) threads the bilayer. The Cytoplasmic portion of the chain corresponds to 176–213 (GNIWESLTAPAIPAPTITTDPIDQTNESEKPPVDQPVD). A disordered region spans residues 193–213 (TTDPIDQTNESEKPPVDQPVD).

It belongs to the WRB/GET1 family. As to quaternary structure, component of the Golgi to ER traffic (GET) complex, which is composed of GET1, GET2 and GET3. Within the complex, GET1 and GET2 form a heterotetramer which is stabilized by phosphatidylinositol binding and which binds to the GET3 homodimer.

The protein resides in the endoplasmic reticulum membrane. Its subcellular location is the golgi apparatus membrane. In terms of biological role, required for the post-translational delivery of tail-anchored (TA) proteins to the endoplasmic reticulum. Together with GET2, acts as a membrane receptor for soluble GET3, which recognizes and selectively binds the transmembrane domain of TA proteins in the cytosol. The GET complex cooperates with the HDEL receptor ERD2 to mediate the ATP-dependent retrieval of resident ER proteins that contain a C-terminal H-D-E-L retention signal from the Golgi to the ER. The polypeptide is Golgi to ER traffic protein 1 (Kluyveromyces lactis (strain ATCC 8585 / CBS 2359 / DSM 70799 / NBRC 1267 / NRRL Y-1140 / WM37) (Yeast)).